The chain runs to 302 residues: Protein NEOXANTHIN-DEFICIENT 1 (302 aa).

In terms of biological role, required for neoxanthin biosynthesis. Probably not involved directly in the enzymatic conversion of violaxanthin to neoxanthin. Is necessary but not sufficient for neoxanthin synthesis. This chain is Protein NEOXANTHIN-DEFICIENT 1, found in Oryza sativa subsp. japonica (Rice).